Here is a 251-residue protein sequence, read N- to C-terminus: Probable ATP-dependent transporter ycf16 (251 aa).

Residues Leu-7–Lys-251 enclose the ABC transporter domain. ATP is bound at residue Gly-39–Ser-46.

The protein belongs to the ABC transporter superfamily. Ycf16 family.

Its subcellular location is the plastid. The protein localises to the chloroplast. The polypeptide is Probable ATP-dependent transporter ycf16 (ycf16) (Antithamnion sp. (Red alga)).